A 663-amino-acid polypeptide reads, in one-letter code: F-box protein DAS1 (663 aa).

The F-box domain occupies 46–91 (VFPLTKLPDELMQEVFSHLPQPDRLQLCLVNKRLNKIATKLLYRRI).

In terms of assembly, interacts with SKP1. Component of the probable SCF(DAS1) complex containing CDC53, SKP1, RBX1 and DAS1.

It participates in protein modification; protein ubiquitination. In terms of biological role, substrate recognition component of a SCF (SKP1-CUL1-F-box protein) E3 ubiquitin-protein ligase complex which mediates the ubiquitination and subsequent proteasomal degradation of target proteins. Probably recognizes and binds to phosphorylated target proteins. In Saccharomyces cerevisiae (strain ATCC 204508 / S288c) (Baker's yeast), this protein is F-box protein DAS1 (DAS1).